A 487-amino-acid polypeptide reads, in one-letter code: Glycogen synthase 2 (487 aa).

K12 is a binding site for ADP-alpha-D-glucose.

Belongs to the glycosyltransferase 1 family. Bacterial/plant glycogen synthase subfamily.

The catalysed reaction is [(1-&gt;4)-alpha-D-glucosyl](n) + ADP-alpha-D-glucose = [(1-&gt;4)-alpha-D-glucosyl](n+1) + ADP + H(+). Its pathway is glycan biosynthesis; glycogen biosynthesis. In terms of biological role, synthesizes alpha-1,4-glucan chains using ADP-glucose. The chain is Glycogen synthase 2 from Methylococcus capsulatus (strain ATCC 33009 / NCIMB 11132 / Bath).